The sequence spans 387 residues: Natterin-4 (387 aa).

The signal sequence occupies residues 1–18 (MKLLVLLVTLLVLSWTSA). Positions 19–46 (EDVGDQEILQQHNEDNNHKSELGEAAPQ) are excised as a propeptide. Over residues 31-40 (NEDNNHKSEL) the composition is skewed to basic and acidic residues. The interval 31–57 (NEDNNHKSELGEAAPQRTDNETSQLGQ) is disordered.

The protein belongs to the natterin family. Contains 4 disulfide bonds. In terms of tissue distribution, expressed by the venom gland.

Its subcellular location is the secreted. With respect to regulation, inhibited by tissue-kallikrein inhibitor TKI and trasylol. Plasma kallikrein inhibitor PKSI527 and classical inhibitors of serine-, metallo-, thiol- or aspartate-peptidases evokes a minor inhibition of the peptide digestion. Functionally, shows nociceptive, edema-inducing and kininogenase activity with release of kallidin from low molecular weight kininogen. The cleavage occurs at Met-Lys bonds. This is Natterin-4 from Thalassophryne nattereri (Copper Joe toadfish).